Reading from the N-terminus, the 130-residue chain is Small ribosomal subunit protein uS9 (130 aa).

This sequence belongs to the universal ribosomal protein uS9 family.

The protein is Small ribosomal subunit protein uS9 of Shewanella sediminis (strain HAW-EB3).